An 86-amino-acid chain; its full sequence is MANIASARKRARQAEKNRQHNMALRSRFRTSVKKVLKAVVAGDKEAAQAALKAAVPVIDGTVNKGLIHKNKAARHKSRLNARVKAM.

The tract at residues 1–22 (MANIASARKRARQAEKNRQHNM) is disordered.

The protein belongs to the bacterial ribosomal protein bS20 family.

Functionally, binds directly to 16S ribosomal RNA. The polypeptide is Small ribosomal subunit protein bS20 (Thioalkalivibrio sulfidiphilus (strain HL-EbGR7)).